A 148-amino-acid polypeptide reads, in one-letter code: Nucleoside diphosphate kinase (148 aa).

6 residues coordinate ATP: Lys9, Phe57, Arg85, Thr91, Arg102, and Asn112. The active-site Pros-phosphohistidine intermediate is the His115.

Belongs to the NDK family. The cofactor is Mg(2+).

It carries out the reaction a 2'-deoxyribonucleoside 5'-diphosphate + ATP = a 2'-deoxyribonucleoside 5'-triphosphate + ADP. The enzyme catalyses a ribonucleoside 5'-diphosphate + ATP = a ribonucleoside 5'-triphosphate + ADP. Functionally, major role in the synthesis of nucleoside triphosphates other than ATP. The ATP gamma phosphate is transferred to the NDP beta phosphate via a ping-pong mechanism, using a phosphorylated active-site intermediate. This Helianthus annuus (Common sunflower) protein is Nucleoside diphosphate kinase.